The following is a 148-amino-acid chain: Glutamyl-tRNA(Gln) amidotransferase subunit C, mitochondrial (148 aa).

This sequence belongs to the GatC family. As to quaternary structure, subunit of the heterotrimeric GatCAB amidotransferase (AdT) complex, composed of A, B and C subunits.

The protein resides in the mitochondrion. The enzyme catalyses L-glutamyl-tRNA(Gln) + L-glutamine + ATP + H2O = L-glutaminyl-tRNA(Gln) + L-glutamate + ADP + phosphate + H(+). In terms of biological role, allows the formation of correctly charged Gln-tRNA(Gln) through the transamidation of misacylated Glu-tRNA(Gln) in the mitochondria. The reaction takes place in the presence of glutamine and ATP through an activated gamma-phospho-Glu-tRNA(Gln). In Drosophila yakuba (Fruit fly), this protein is Glutamyl-tRNA(Gln) amidotransferase subunit C, mitochondrial.